A 332-amino-acid chain; its full sequence is Cell growth regulator with RING finger domain protein 1 (332 aa).

Residues 274 to 309 (CVVCQNGGVNWVLLPCRHACLCDSCVCYFKQCPMCR) form an RING-type zinc finger.

Highly expressed in testis, lower levels of expression is seen in skeletal muscle, liver, lung and brain.

It is found in the nucleus. The protein resides in the endoplasmic reticulum. Functionally, able to inhibit growth in several cell lines. This Rattus norvegicus (Rat) protein is Cell growth regulator with RING finger domain protein 1 (Cgrrf1).